An 89-amino-acid chain; its full sequence is Phytosulfokines 1 (89 aa).

The signal sequence occupies residues 1–22 (MVNPGRTARALCLLCLALLLLG). A propeptide spanning residues 23–79 (QDTHSRKLLLQEKHSHGVGNGTTTTQEPSRENGGSTGSNNNGQLQFDSAKWEEFHTD) is cleaved from the precursor. Positions 33–68 (QEKHSHGVGNGTTTTQEPSRENGGSTGSNNNGQLQF) are disordered. Residue N42 is glycosylated (N-linked (GlcNAc...) asparagine). Y80 and Y82 each carry sulfotyrosine. A propeptide spanning residues 85 to 89 (DVKNP) is cleaved from the precursor.

It belongs to the phytosulfokine family. In terms of processing, sulfation is important for activity and for the binding to a putative membrane receptor. PSK-alpha is produced by endopeptidase digestion. PSK-beta is produced from PSK-alpha by exopeptidase digestion. In terms of tissue distribution, expressed throughout the seedling. More abundant in fragments containing shoot or root apexes where cells proliferate vigorously.

It localises to the secreted. Its function is as follows. Promotes plant cell differentiation, organogenesis and somatic embryogenesis as well as cell proliferation. The chain is Phytosulfokines 1 (PSK1) from Oryza sativa subsp. indica (Rice).